Reading from the N-terminus, the 477-residue chain is Glycogen synthase (477 aa).

K15 contributes to the ADP-alpha-D-glucose binding site.

Belongs to the glycosyltransferase 1 family. Bacterial/plant glycogen synthase subfamily.

The catalysed reaction is [(1-&gt;4)-alpha-D-glucosyl](n) + ADP-alpha-D-glucose = [(1-&gt;4)-alpha-D-glucosyl](n+1) + ADP + H(+). It functions in the pathway glycan biosynthesis; glycogen biosynthesis. In terms of biological role, synthesizes alpha-1,4-glucan chains using ADP-glucose. The polypeptide is Glycogen synthase (Escherichia coli O139:H28 (strain E24377A / ETEC)).